The primary structure comprises 449 residues: N-succinylarginine dihydrolase (449 aa).

Substrate contacts are provided by residues 19–28, Asn-110, and 137–138; these read GGLSYGNVAS and HR. Residues 23-43 are disordered; sequence YGNVASQSNSQQASNPREAAR. Residues 27–37 show a composition bias toward low complexity; it reads ASQSNSQQASN. The active site involves Glu-174. Arg-214 is a binding site for substrate. His-250 is an active-site residue. Asp-252 and Asn-365 together coordinate substrate. Cys-371 functions as the Nucleophile in the catalytic mechanism.

This sequence belongs to the succinylarginine dihydrolase family. Homodimer.

The enzyme catalyses N(2)-succinyl-L-arginine + 2 H2O + 2 H(+) = N(2)-succinyl-L-ornithine + 2 NH4(+) + CO2. The protein operates within amino-acid degradation; L-arginine degradation via AST pathway; L-glutamate and succinate from L-arginine: step 2/5. Functionally, catalyzes the hydrolysis of N(2)-succinylarginine into N(2)-succinylornithine, ammonia and CO(2). This is N-succinylarginine dihydrolase from Pseudomonas putida (strain ATCC 47054 / DSM 6125 / CFBP 8728 / NCIMB 11950 / KT2440).